The primary structure comprises 524 residues: Light-independent protochlorophyllide reductase subunit B (524 aa).

Residue Asp36 coordinates [4Fe-4S] cluster. Catalysis depends on Asp290, which acts as the Proton donor. 425–426 is a binding site for substrate; that stretch reads GL.

This sequence belongs to the ChlB/BchB/BchZ family. As to quaternary structure, protochlorophyllide reductase is composed of three subunits; ChlL, ChlN and ChlB. Forms a heterotetramer of two ChlB and two ChlN subunits. It depends on [4Fe-4S] cluster as a cofactor.

It carries out the reaction chlorophyllide a + oxidized 2[4Fe-4S]-[ferredoxin] + 2 ADP + 2 phosphate = protochlorophyllide a + reduced 2[4Fe-4S]-[ferredoxin] + 2 ATP + 2 H2O. It participates in porphyrin-containing compound metabolism; chlorophyll biosynthesis (light-independent). Component of the dark-operative protochlorophyllide reductase (DPOR) that uses Mg-ATP and reduced ferredoxin to reduce ring D of protochlorophyllide (Pchlide) to form chlorophyllide a (Chlide). This reaction is light-independent. The NB-protein (ChlN-ChlB) is the catalytic component of the complex. The protein is Light-independent protochlorophyllide reductase subunit B of Synechococcus sp. (strain CC9605).